The chain runs to 302 residues: HTH-type transcriptional regulator ArgP (302 aa).

In terms of domain architecture, HTH lysR-type spans 4 to 60 (PDYRTLQALDAVIRERGFERAAQKLCITQSAVSQRIKQLENLFGQPLLVRTVPPRPT). Positions 21–40 (FERAAQKLCITQSAVSQRIK) form a DNA-binding region, H-T-H motif.

This sequence belongs to the LysR transcriptional regulatory family. In terms of assembly, homodimer.

Functionally, controls the transcription of genes involved in arginine and lysine metabolism. The chain is HTH-type transcriptional regulator ArgP from Yersinia pseudotuberculosis serotype O:1b (strain IP 31758).